Here is a 689-residue protein sequence, read N- to C-terminus: MADNLVIVESPAKAKTIEKYLGKKYKVIASMGHVRDLPRSQMGVDTEDNYEPKYITIRGKGPVVKELKKHAKKAKNVFLASDPDREGEAIAWHLSKILELEDSKENRVVFNEITKDAVKESFKNPREIEMNLVDAQQARRILDRLVGYNISPVLWKKVKKGLSAGRVQSVALRLVIDRENEIRNFKPEEYWIIEGEFRYKKSKFNAKFLHYKNKPFKLKTKKDIEKITAALDGDQFEITNVTKKEKTRNPANPFTTSTLQQEAARKLNFKARKTMMVAQQLYEGIDLKKQGTIGLITYMRTDSTRISDTAKAEAKQYITDKYGESYTSKRKASGKQGDQDAHEAIRPSSTMRTPDDMKSFLTKDQYRLYKLIWERFVASQMAPAILDTVSLDITQGDIKFRANGQTIKFKGFMTLYVETKDDIDSEKENKLPKLEQGDKVTATQIEPAQHYTQPPPRYTEARLVKTLEELKIGRPSTYAPTIDTIQKRNYVKLESKRFVPTELGEIVHEQVKEYFPEIIDVEFTVNMETLLDKIAEGDITWRKVIDGFFSSFKQDVERAEEEMEKIEIKDEPAGEDCEVCGSPMVIKMGRYGKFMACSNFPDCRNTKAIVKSIGVKCPKCNDGDVVERKSKKNRVFYGCSKYPECDFISWDKPIGRDCPKCNQYLVENKKGKTTQVICSNCDYKEAAQK.

Residues 3–113 form the Toprim domain; it reads DNLVIVESPA…KENRVVFNEI (111 aa). Mg(2+) contacts are provided by glutamate 9 and aspartate 82. Residues 129-557 form the Topo IA-type catalytic domain; the sequence is EMNLVDAQQA…FFSSFKQDVE (429 aa). The interaction with DNA stretch occupies residues 163-168; the sequence is SAGRVQ. Tyrosine 298 (O-(5'-phospho-DNA)-tyrosine intermediate) is an active-site residue. Positions 328-357 are disordered; the sequence is SKRKASGKQGDQDAHEAIRPSSTMRTPDDM. 3 C4-type zinc fingers span residues 577 to 603, 617 to 645, and 658 to 681; these read CEVC…FPDC, CPKC…YPEC, and CPKC…CSNC.

The protein belongs to the type IA topoisomerase family. In terms of assembly, monomer. Mg(2+) is required as a cofactor.

It carries out the reaction ATP-independent breakage of single-stranded DNA, followed by passage and rejoining.. Releases the supercoiling and torsional tension of DNA, which is introduced during the DNA replication and transcription, by transiently cleaving and rejoining one strand of the DNA duplex. Introduces a single-strand break via transesterification at a target site in duplex DNA. The scissile phosphodiester is attacked by the catalytic tyrosine of the enzyme, resulting in the formation of a DNA-(5'-phosphotyrosyl)-enzyme intermediate and the expulsion of a 3'-OH DNA strand. The free DNA strand then undergoes passage around the unbroken strand, thus removing DNA supercoils. Finally, in the religation step, the DNA 3'-OH attacks the covalent intermediate to expel the active-site tyrosine and restore the DNA phosphodiester backbone. This chain is DNA topoisomerase 1, found in Staphylococcus aureus (strain bovine RF122 / ET3-1).